A 758-amino-acid polypeptide reads, in one-letter code: 5-methyltetrahydropteroyltriglutamate--homocysteine methyltransferase (758 aa).

5-methyltetrahydropteroyltri-L-glutamate contacts are provided by residues 16–19 (RELK) and K116. L-homocysteine contacts are provided by residues 436–438 (IGS) and E489. L-methionine contacts are provided by residues 436–438 (IGS) and E489. 5-methyltetrahydropteroyltri-L-glutamate-binding positions include 520–521 (RC) and W566. An L-homocysteine-binding site is contributed by D604. D604 is an L-methionine binding site. E610 contacts 5-methyltetrahydropteroyltri-L-glutamate. The Zn(2+) site is built by H646, C648, and E670. Catalysis depends on H699, which acts as the Proton donor. Zn(2+) is bound at residue C731.

This sequence belongs to the vitamin-B12 independent methionine synthase family. Zn(2+) serves as cofactor.

It carries out the reaction 5-methyltetrahydropteroyltri-L-glutamate + L-homocysteine = tetrahydropteroyltri-L-glutamate + L-methionine. It participates in amino-acid biosynthesis; L-methionine biosynthesis via de novo pathway; L-methionine from L-homocysteine (MetE route): step 1/1. Catalyzes the transfer of a methyl group from 5-methyltetrahydrofolate to homocysteine resulting in methionine formation. This chain is 5-methyltetrahydropteroyltriglutamate--homocysteine methyltransferase, found in Nitrosococcus oceani (strain ATCC 19707 / BCRC 17464 / JCM 30415 / NCIMB 11848 / C-107).